A 542-amino-acid chain; its full sequence is Chaperonin GroEL (542 aa).

ATP contacts are provided by residues 29 to 32 (TLGP), lysine 50, 86 to 90 (DGTTT), glycine 413, 477 to 479 (NAA), and aspartate 493.

Belongs to the chaperonin (HSP60) family. In terms of assembly, forms a cylinder of 14 subunits composed of two heptameric rings stacked back-to-back. Interacts with the co-chaperonin GroES.

The protein localises to the cytoplasm. The catalysed reaction is ATP + H2O + a folded polypeptide = ADP + phosphate + an unfolded polypeptide.. Its function is as follows. Together with its co-chaperonin GroES, plays an essential role in assisting protein folding. The GroEL-GroES system forms a nano-cage that allows encapsulation of the non-native substrate proteins and provides a physical environment optimized to promote and accelerate protein folding. The chain is Chaperonin GroEL from Solibacter usitatus (strain Ellin6076).